We begin with the raw amino-acid sequence, 452 residues long: Protein CSN12 homolog (452 aa).

The 198-residue stretch at 249-446 (VTFKYYEGVL…GFVVLSKSGA (198 aa)) folds into the PCI domain.

Belongs to the CSN12 family.

The protein is Protein CSN12 homolog (csn-8) of Neurospora crassa (strain ATCC 24698 / 74-OR23-1A / CBS 708.71 / DSM 1257 / FGSC 987).